The sequence spans 141 residues: Large ribosomal subunit protein uL11 (141 aa).

It belongs to the universal ribosomal protein uL11 family. Part of the ribosomal stalk of the 50S ribosomal subunit. Interacts with L10 and the large rRNA to form the base of the stalk. L10 forms an elongated spine to which L12 dimers bind in a sequential fashion forming a multimeric L10(L12)X complex. One or more lysine residues are methylated.

Functionally, forms part of the ribosomal stalk which helps the ribosome interact with GTP-bound translation factors. In Parasynechococcus marenigrum (strain WH8102), this protein is Large ribosomal subunit protein uL11.